The primary structure comprises 177 residues: MIVGLSNPKKEYHSTRHNVGSWYLYSLAESYLRNFKNEKKFFGFTTSLNIESNYIRLLIPNIFMNINGQSVFKMASFYNINLSEILIVHDDLELQPGISKLKYSYGHNGHNGLRDIVNTFNKNINFYRFRIGIGRPINRDQIASFVLSNPTKKEKILIQKSILHAIEKNVLSNILKF.

A tRNA-binding site is contributed by Y12. H17 serves as the catalytic Proton acceptor. TRNA contacts are provided by F63, N65, and N111.

This sequence belongs to the PTH family. In terms of assembly, monomer.

The protein localises to the cytoplasm. It catalyses the reaction an N-acyl-L-alpha-aminoacyl-tRNA + H2O = an N-acyl-L-amino acid + a tRNA + H(+). Hydrolyzes ribosome-free peptidyl-tRNAs (with 1 or more amino acids incorporated), which drop off the ribosome during protein synthesis, or as a result of ribosome stalling. Its function is as follows. Catalyzes the release of premature peptidyl moieties from peptidyl-tRNA molecules trapped in stalled 50S ribosomal subunits, and thus maintains levels of free tRNAs and 50S ribosomes. This Buchnera aphidicola subsp. Acyrthosiphon pisum (strain 5A) protein is Peptidyl-tRNA hydrolase.